The following is a 702-amino-acid chain: Pentatricopeptide repeat-containing protein At4g16390, chloroplastic (702 aa).

A chloroplast-targeting transit peptide spans 1-53 (MSFHHLCSSPSSLLHDPLPLCNLLSVYPKSTPRSFLSSYNPNSSHFHSRNLLQ). 9 PPR repeats span residues 174–208 (EVIL…GIKP), 209–243 (DNAT…GCEP), 244–278 (DNVT…KWRI), 279–313 (DAVT…GVKP), 314–348 (NLVI…GFTP), 349–383 (NWST…GLSL), 384–414 (TVIL…MKNC), 420–454 (DSWT…GFEP), and 455–489 (TLFV…GITP). Residues 603–688 (LHLKSLSLGA…WFLTTSVAAK (86 aa)) enclose the Smr domain.

This sequence belongs to the PPR family. P subfamily. In terms of tissue distribution, expressed in leaves and flowers and at lower levels in stems and flower buds.

It is found in the plastid. It localises to the chloroplast. Functionally, involved in chloroplast RNA processing. Can bind RNA. Involved in chloroplast development. Involved in chloroplast ribosomal RNA (rRNA) processing and/or translation. Required for FtsH-mediated chloroplast biogenesis. Involved in translation and accumulation of chloroplast ATP synthase subunits. The chain is Pentatricopeptide repeat-containing protein At4g16390, chloroplastic from Arabidopsis thaliana (Mouse-ear cress).